Here is a 174-residue protein sequence, read N- to C-terminus: Ly6/PLAUR domain-containing protein 6 (174 aa).

Residues Met1–Ala22 form the signal peptide. The UPAR/Ly6 domain maps to Phe47–Ser141. 6 cysteine pairs are disulfide-bonded: Cys49-Cys77, Cys52-Cys61, Cys70-Cys96, Cys102-Cys121, Cys107-Cys118, and Cys122-Cys127. 2 N-linked (GlcNAc...) asparagine glycosylation sites follow: Asn134 and Asn147. A lipid anchor (GPI-anchor amidated serine) is attached at Ser149. The propeptide at Ala150–Asn174 is removed in mature form.

In terms of assembly, interacts with fzd8 and lrp6.

It is found in the cell membrane. The protein localises to the membrane raft. In terms of biological role, acts as an important regulator of embryogenesis through its enhancement of Wnt/beta-catenin signaling. Positively regulates Wnt/beta-catenin signaling by ensuring phosphorylation of lrp6 specifically in plasma membrane rafts and its subsequent internalization into signaling-competent vesicles. Essential for the wnt8-mediated patterning of the mesoderm and neuroectoderm during gastrulation. The polypeptide is Ly6/PLAUR domain-containing protein 6 (lypd6) (Danio rerio (Zebrafish)).